Reading from the N-terminus, the 498-residue chain is ATP synthase subunit beta, chloroplastic (498 aa).

172–179 contacts ATP; it reads GGAGVGKT.

Belongs to the ATPase alpha/beta chains family. As to quaternary structure, F-type ATPases have 2 components, CF(1) - the catalytic core - and CF(0) - the membrane proton channel. CF(1) has five subunits: alpha(3), beta(3), gamma(1), delta(1), epsilon(1). CF(0) has four main subunits: a(1), b(1), b'(1) and c(9-12).

The protein resides in the plastid. Its subcellular location is the chloroplast thylakoid membrane. The enzyme catalyses ATP + H2O + 4 H(+)(in) = ADP + phosphate + 5 H(+)(out). Functionally, produces ATP from ADP in the presence of a proton gradient across the membrane. The catalytic sites are hosted primarily by the beta subunits. In Coffea arabica (Arabian coffee), this protein is ATP synthase subunit beta, chloroplastic.